A 295-amino-acid polypeptide reads, in one-letter code: Nucleotide-binding protein LACR_1047 (295 aa).

12-19 provides a ligand contact to ATP; it reads GMSGAGKT. 63 to 66 is a GTP binding site; sequence DMRS.

The protein belongs to the RapZ-like family.

Displays ATPase and GTPase activities. This Lactococcus lactis subsp. cremoris (strain SK11) protein is Nucleotide-binding protein LACR_1047.